Consider the following 193-residue polypeptide: UPF0397 protein PA0141 (193 aa).

A run of 5 helical transmembrane segments spans residues 11–31, 43–63, 69–89, 109–129, and 147–167; these read VTIAINTAIYVILSCFASIPI, FLVFVAVLFGSKVGLSVGLLG, FFLFGNVYFNWIVCSGLLGFL, ILFFWLYQVFVNVLVFGLIAP, and GFLVVLSNILSYSLFGIFLMS.

It belongs to the UPF0397 family.

The protein localises to the cell membrane. The polypeptide is UPF0397 protein PA0141 (Phytoplasma australiense).